The sequence spans 123 residues: Glycine cleavage system H protein (123 aa).

One can recognise a Lipoyl-binding domain in the interval 22-104 (VATVGITSYA…FGAGWLVKVR (83 aa)). Lys-63 is modified (N6-lipoyllysine).

This sequence belongs to the GcvH family. As to quaternary structure, the glycine cleavage system is composed of four proteins: P, T, L and H. The cofactor is (R)-lipoate.

Its function is as follows. The glycine cleavage system catalyzes the degradation of glycine. The H protein shuttles the methylamine group of glycine from the P protein to the T protein. In Clavibacter sepedonicus (Clavibacter michiganensis subsp. sepedonicus), this protein is Glycine cleavage system H protein.